Reading from the N-terminus, the 350-residue chain is Histidinol-phosphate aminotransferase 2 (350 aa).

Lys210 carries the N6-(pyridoxal phosphate)lysine modification.

This sequence belongs to the class-II pyridoxal-phosphate-dependent aminotransferase family. Histidinol-phosphate aminotransferase subfamily. As to quaternary structure, homodimer. It depends on pyridoxal 5'-phosphate as a cofactor.

It carries out the reaction L-histidinol phosphate + 2-oxoglutarate = 3-(imidazol-4-yl)-2-oxopropyl phosphate + L-glutamate. The protein operates within amino-acid biosynthesis; L-histidine biosynthesis; L-histidine from 5-phospho-alpha-D-ribose 1-diphosphate: step 7/9. The sequence is that of Histidinol-phosphate aminotransferase 2 from Mannheimia succiniciproducens (strain KCTC 0769BP / MBEL55E).